A 352-amino-acid chain; its full sequence is Serine protease 55 (352 aa).

Residues Met-1–Leu-18 form the signal peptide. The 233-residue stretch at Ile-68–Gln-300 folds into the Peptidase S1 domain. A disulfide bond links Cys-93 and Cys-109. Active-site charge relay system residues include His-108 and Asp-156. Cystine bridges form between Cys-189–Cys-256, Cys-222–Cys-235, and Cys-246–Cys-276. Asn-240 is a glycosylation site (N-linked (GlcNAc...) asparagine). The active-site Charge relay system is Ser-250. The tract at residues Ala-308–Pro-330 is disordered. Over residues Pro-319–Pro-330 the composition is skewed to low complexity. Ser-325 carries the GPI-anchor amidated serine lipid modification. The propeptide at Gly-326 to Tyr-352 is removed in mature form.

Belongs to the peptidase S1 family. In terms of tissue distribution, only detected in testis. Expressed in spermatogonia, spermatocytes, spermatids, Leydig and Sertoli cells. Expressed in prostate cancer and ovarian cancer (at protein level).

Its subcellular location is the cell membrane. The protein localises to the cytoplasm. It localises to the cytosol. In terms of biological role, probable serine protease, which plays a crucial role in the fertility of male mice including sperm migration and sperm-egg interaction. This is Serine protease 55 (PRSS55) from Homo sapiens (Human).